The sequence spans 389 residues: Succinyl-diaminopimelate desuccinylase (389 aa).

H72 lines the Zn(2+) pocket. The active site involves D74. D105 is a Zn(2+) binding site. The active-site Proton acceptor is E144. Zn(2+) is bound by residues E145, E173, and H362.

It belongs to the peptidase M20A family. DapE subfamily. Homodimer. Zn(2+) serves as cofactor. Co(2+) is required as a cofactor.

The catalysed reaction is N-succinyl-(2S,6S)-2,6-diaminopimelate + H2O = (2S,6S)-2,6-diaminopimelate + succinate. It functions in the pathway amino-acid biosynthesis; L-lysine biosynthesis via DAP pathway; LL-2,6-diaminopimelate from (S)-tetrahydrodipicolinate (succinylase route): step 3/3. Catalyzes the hydrolysis of N-succinyl-L,L-diaminopimelic acid (SDAP), forming succinate and LL-2,6-diaminopimelate (DAP), an intermediate involved in the bacterial biosynthesis of lysine and meso-diaminopimelic acid, an essential component of bacterial cell walls. This Nitrobacter hamburgensis (strain DSM 10229 / NCIMB 13809 / X14) protein is Succinyl-diaminopimelate desuccinylase.